We begin with the raw amino-acid sequence, 2485 residues long: Polyprotein P1234 (2485 aa).

The Alphavirus-like MT domain occupies 28 to 259; that stretch reads EAKQVTDNDH…EKRDLLRSWH (232 aa). The interval 244–263 is nsP1 membrane-binding; sequence GSTIYHEKRDLLRSWHLPSV. Cys419 is lipidated: S-palmitoyl cysteine; by host. The 152-residue stretch at 690–841 folds into the (+)RNA virus helicase ATP-binding domain; it reads ELVDPPFHEF…HEICTQVFHK (152 aa). 721–728 serves as a coordination point for a ribonucleoside 5'-triphosphate; it reads GVPGSGKS. Residues 842-990 form the (+)RNA virus helicase C-terminal domain; that stretch reads SISRRCTKSV…IEEWQAEHDA (149 aa). Positions 1003–1322 constitute a Peptidase C9 domain; that stretch reads DVFQNKANVC…STLTNIYTGS (320 aa). Residues 1004–1023 form a nucleolus localization signal region; sequence VFQNKANVCWAKALVPVLKT. Catalysis depends on Cys1012, which acts as the For cysteine protease nsP2 activity. The short motif at 1056 to 1065 is the Nuclear export signal element; that stretch reads VRFFGLDLDS. Residue His1081 is the For cysteine protease nsP2 activity of the active site. Positions 1179–1183 match the Nuclear localization signal motif; it reads PGKTV. One can recognise a Macro domain in the interval 1328 to 1489; sequence GCAPSYHVVR…TLKEAVARRE (162 aa). ADP-D-ribose is bound by residues Asp1339, Asn1353, Gly1361, Gly1441, Ile1442, and Phe1443. Residues Cys1596, Cys1598, Cys1621, and Cys1639 each coordinate Zn(2+). Residues 1783–1810 form a disordered region; it reads PRTVFRNPPQPAPRTRTPSLAPSRASSR. The span at 1798–1810 shows a compositional bias: polar residues; it reads RTPSLAPSRASSR. 2 tandem repeats follow at residues 1810–1831 and 1844–1865. Residues 1810–1865 are 2 X 21 AA approximate repeats, binding to host FXR family members; the sequence is RISLVSNPPGVNRVITREELEALTPSRAPSRSVSRTSLVSNPPGVNRVITREEFEA. The RdRp catalytic domain maps to 2242–2357; it reads DCVLETDIAS…KGVKSDKLMA (116 aa).

In terms of assembly, interacts with non-structural protein 3. Interacts with RNA-directed RNA polymerase nsP4. Interacts with protease nsP2. interacts with itself. Interacts with mRNA-capping enzyme nsP1. Interacts with host DDX1. Interacts with host DDX3. Interacts (via C-terminus) with host FXR1; this interaction inhibits the formation of host stress granules on viral mRNAs and the nsp3-FXR1 complexes bind viral RNAs and probably orchestrate the assembly of viral replication complexes. Interacts (via C-terminus) with host FXR2; this interaction inhibits the formation of host stress granules on viral mRNAs and the nsp3-FXR2 complexes bind viral RNAs and probably orchestrate the assembly of viral replication complexes. Interacts (via C-terminus) with host FMR1; this interaction inhibits the formation of host stress granules on viral mRNAs and the nsp3-FMR1 complexes bind viral RNAs and probably orchestrate the assembly of viral replication complexes. As to quaternary structure, interacts with mRNA-capping enzyme nsP1. Interacts with protease nsP2. interacts with itself. In terms of assembly, interacts with RNA-directed RNA polymerase nsP4. Interacts with mRNA-capping enzyme nsP1. Interacts with KPNA1/karyopherin-alpha1; this interaction probably allows the active transport of protease nsP2 into the host nucleus. Mg(2+) is required as a cofactor. It depends on Mn(2+) as a cofactor. Specific enzymatic cleavages in vivo yield mature proteins. The processing of the polyprotein is temporally regulated. In early stages (1.7 hpi), P1234 is first cleaved in trans through its nsP2 protease activity, releasing P123' and nsP4, which associate to form the early replication complex. At the same time, P1234 is also cut at the nsP1/nsP2 site early in infection but with lower efficiency. After replication of the viral minus-strand RNAs (4 hpi), the polyproteins are cut at the nsP1/nsP2 and nsP2/nsP3 sites very efficiently, preventing accumulation of P123' and P1234 and allowing the formation of the late replication complex. NsP3'/nsP4 site is not cleaved anymore and P34 is produced rather than nsP4. Post-translationally, specific enzymatic cleavages in vivo yield mature proteins. The processing of the polyprotein is temporally regulated. In early stages (1.7 hpi), P123 is cleaved at the nsP1/nsP2 site with low efficiency. After replication of the viral minus-strand RNAs (4 hpi), the polyproteins are cut at the nsP1/nsP2 and nsP2/nsP3 sites very efficiently, preventing accumulation of P123 and allowing the formation of the late replication complex. In terms of processing, specific enzymatic cleavages in vivo yield mature proteins. The processing of the polyprotein is temporally regulated. In early stages (1.7 hpi), P123' is cleaved at the nsP1/nsP2 site with low efficiency. After replication of the viral minus-strand RNAs (4 hpi), the polyproteins are cut at the nsP1/nsP2 and nsP2/nsP3 sites very efficiently, preventing accumulation of P123' and allowing the formation of the late replication complex. Palmitoylated by host palmitoyltransferases ZDHHC2 and ZDHHC19. Post-translationally, phosphorylated by host on serines and threonines. In terms of processing, ubiquitinated; targets the protein for rapid degradation via the ubiquitin system. Nsp4 is present in extremely low quantities due to low frequency of translation through the amber stop-codon and the degradation by the ubiquitin pathway.

It localises to the host cytoplasmic vesicle membrane. Its subcellular location is the host cell membrane. It is found in the host cell projection. The protein resides in the host filopodium. The protein localises to the host nucleus. It localises to the host cytoplasm. The catalysed reaction is GTP + S-adenosyl-L-methionine = N(7)-methyl-GTP + S-adenosyl-L-homocysteine. The enzyme catalyses N(7)-methyl-GTP + L-histidyl-[protein] = N(tele)-(N(7)-methylguanosine 5'-phospho)-L-histidyl-[protein] + diphosphate. It carries out the reaction N(tele)-(N(7)-methylguanosine 5'-phospho)-L-histidyl-[protein] + a 5'-end diphospho-(purine-ribonucleoside) in mRNA + H(+) = a 5'-end (N(7)-methyl 5'-triphosphoguanosine)-(purine-ribonucleoside) in mRNA + L-histidyl-[protein]. It catalyses the reaction a 5'-end triphospho-ribonucleoside in mRNA + H2O = a 5'-end diphospho-ribonucleoside in mRNA + phosphate + H(+). The catalysed reaction is a ribonucleoside 5'-triphosphate + H2O = a ribonucleoside 5'-diphosphate + phosphate + H(+). The enzyme catalyses ATP + H2O = ADP + phosphate + H(+). It carries out the reaction RNA(n) + a ribonucleoside 5'-triphosphate = RNA(n+1) + diphosphate. It catalyses the reaction 4-O-(ADP-D-ribosyl)-L-aspartyl-[protein] + H2O = L-aspartyl-[protein] + ADP-D-ribose + H(+). The catalysed reaction is 5-O-(ADP-D-ribosyl)-L-glutamyl-[protein] + H2O = L-glutamyl-[protein] + ADP-D-ribose + H(+). The enzyme catalyses RNA(n) + ATP = RNA(n)-3'-adenine ribonucleotide + diphosphate. It carries out the reaction ADP-alpha-D-ribose 1''-phosphate + H2O = ADP-D-ribose + phosphate. Inhibited by sinefungin. Functionally, inactive precursor of the viral replicase, which is activated by cleavages carried out by the viral protease nsP2. Its function is as follows. The early replication complex formed by the polyprotein P123 and nsP4 synthesizes the minus-strand RNAs (antigenome). Polyprotein P123 is a short-lived polyprotein that accumulates during early stage of infection. As soon P123 is cleaved into mature proteins, the plus-strand RNAs synthesis begins. The early replication complex formed by the polyprotein P123' and nsP4 synthesizes minus-strand RNAs (antigenome). Polyprotein P123' is a short-lived polyprotein that accumulates during early stage of infection. As soon P123' is cleaved into mature proteins, the plus-strand RNAs synthesis begins. In terms of biological role, cytoplasmic capping enzyme that catalyzes two virus-specific reactions: methyltransferase and nsP1 guanylyltransferase. mRNA-capping is necessary since all viral RNAs are synthesized in the cytoplasm, and host capping enzymes are restricted to the nucleus. The enzymatic reaction involves a covalent link between 7-methyl-GMP and nsP1, whereas eukaryotic capping enzymes form a covalent complex only with GMP. NsP1 capping consists in the following reactions: GTP is first methylated into 7-methyl-GMP and then is covalently linked to nsP1 to form the m7GMp-nsP1 complex from which 7-methyl-GMP complex is transferred to the mRNA to create the cap structure. NsP1 is also needed for the initiation of the minus-strand RNAs synthesis. Probably serves as a membrane anchor for the replication complex composed of nsP1-nsP4. Nsp1 is needed for the initiation of the minus-strand RNAs synthesis. Palmitoylated nsP1 is remodeling host cell cytoskeleton, and induces filopodium-like structure formation at the surface of the host cell. Functionally, multifunctional protein whose N-terminus is part of the RNA polymerase complex and displays NTPase, RNA triphosphatase and helicase activities. NTPase and RNA triphosphatase are involved in viral RNA capping and helicase keeps a check on the dsRNA replication intermediates. The C-terminus harbors a protease that specifically cleaves the polyproteins and releases the mature proteins. Required for the shutoff of minus-strand RNAs synthesis. Inhibits host translation to ensure maximal viral gene expression and evade host immune response. Its function is as follows. Seems to be essential for minus-strand RNAs and subgenomic 26S mRNAs synthesis. Displays mono-ADP-ribosylhydrolase activity. ADP-ribosylation is a post-translational modification that controls various processes of the host cell and the virus probably needs to revert it for optimal viral replication. Binds proteins of FXR family and sequesters them into the viral RNA replication complexes thereby inhibiting the formation of host stress granules on viral mRNAs. The nsp3-FXR complexes bind viral RNAs and probably orchestrate the assembly of viral replication complexes, thanks to the ability of FXR family members to self-assemble and bind DNA. Seems to be essential for minus-strand RNAs and subgenomic 26S mRNAs synthesis. Displays mono-ADP-ribosylhydrolase activity. ADP-ribosylation is a post-translational modification that controls various processes of the host cell and the virus probably needs to revert it for optimal viral replication. Binds proteins of FXR family and sequesters them into the viral RNA replication complexes thereby inhibiting the formation of host stress granules on viral mRNAs. The nsp3'-FXR complexes bind viral RNAs and probably orchestrate the assembly of viral replication complexes, thanks to the ability of FXR family members to self-assemble and bind DNA. In terms of biological role, RNA dependent RNA polymerase. Replicates genomic and antigenomic RNA by recognizing replications specific signals. The early replication complex formed by the polyprotein P123 and nsP4 synthesizes minus-strand RNAs. The late replication complex composed of fully processed nsP1-nsP4 is responsible for the production of genomic and subgenomic plus-strand RNAs. This is Polyprotein P1234 from Venezuelan equine encephalitis virus (strain 3880) (VEEV).